Consider the following 243-residue polypeptide: UPF0502 protein RALTA_B0914 (243 aa).

The span at 1–10 (MPSTPESDPT) shows a compositional bias: polar residues. Residues 1-23 (MPSTPESDPTQPGDRPARPALRP) form a disordered region.

This sequence belongs to the UPF0502 family.

This Cupriavidus taiwanensis (strain DSM 17343 / BCRC 17206 / CCUG 44338 / CIP 107171 / LMG 19424 / R1) (Ralstonia taiwanensis (strain LMG 19424)) protein is UPF0502 protein RALTA_B0914.